Reading from the N-terminus, the 628-residue chain is ATP-dependent zinc metalloprotease FtsH (628 aa).

Residues 1–7 are Stromal-facing; sequence MKLSWKT. Residues 8-28 form a helical membrane-spanning segment; that stretch reads LLLWSLPIFVIGFFFWQGFLG. Residues 29–118 are Lumenal-facing; it reads PTTTDVGSNI…AHPPKSTSAV (90 aa). A helical transmembrane segment spans residues 119-139; sequence WGLLGNLLFPLLLVGGLAFLF. Residues 140-628 lie on the Stromal side of the membrane; the sequence is RRSNNASGGP…PEKNYYISQF (489 aa). 213–220 contributes to the ATP binding site; sequence GPPGTGKT. H434 contributes to the Zn(2+) binding site. The active site involves E435. 2 residues coordinate Zn(2+): H438 and D512.

The protein in the central section; belongs to the AAA ATPase family. It in the C-terminal section; belongs to the peptidase M41 family. In terms of assembly, homohexamer. Requires Zn(2+) as cofactor.

Its subcellular location is the plastid. The protein localises to the chloroplast thylakoid membrane. Acts as a processive, ATP-dependent zinc metallopeptidase. The sequence is that of ATP-dependent zinc metalloprotease FtsH from Pyropia yezoensis (Susabi-nori).